The primary structure comprises 153 residues: Small ribosomal subunit protein uS5 (153 aa).

Residues 15–78 form the S5 DRBM domain; sequence FQEVVVNIGR…DDAFKNLIHV (64 aa).

The protein belongs to the universal ribosomal protein uS5 family. In terms of assembly, part of the 30S ribosomal subunit. Contacts proteins S4 and S8.

Its function is as follows. With S4 and S12 plays an important role in translational accuracy. Located at the back of the 30S subunit body where it stabilizes the conformation of the head with respect to the body. The chain is Small ribosomal subunit protein uS5 from Helicobacter pylori (strain P12).